The primary structure comprises 449 residues: ATP-dependent protease ATPase subunit HslU (449 aa).

ATP contacts are provided by residues I18, 60–65 (GVGKTE), D261, E327, and R399.

Belongs to the ClpX chaperone family. HslU subfamily. A double ring-shaped homohexamer of HslV is capped on each side by a ring-shaped HslU homohexamer. The assembly of the HslU/HslV complex is dependent on binding of ATP.

Its subcellular location is the cytoplasm. ATPase subunit of a proteasome-like degradation complex; this subunit has chaperone activity. The binding of ATP and its subsequent hydrolysis by HslU are essential for unfolding of protein substrates subsequently hydrolyzed by HslV. HslU recognizes the N-terminal part of its protein substrates and unfolds these before they are guided to HslV for hydrolysis. This Oleidesulfovibrio alaskensis (strain ATCC BAA-1058 / DSM 17464 / G20) (Desulfovibrio alaskensis) protein is ATP-dependent protease ATPase subunit HslU.